The sequence spans 139 residues: ATP synthase epsilon chain (139 aa).

The protein belongs to the ATPase epsilon chain family. In terms of assembly, F-type ATPases have 2 components, CF(1) - the catalytic core - and CF(0) - the membrane proton channel. CF(1) has five subunits: alpha(3), beta(3), gamma(1), delta(1), epsilon(1). CF(0) has three main subunits: a, b and c.

The protein localises to the cell membrane. Functionally, produces ATP from ADP in the presence of a proton gradient across the membrane. The polypeptide is ATP synthase epsilon chain (Pediococcus pentosaceus (strain ATCC 25745 / CCUG 21536 / LMG 10740 / 183-1w)).